A 169-amino-acid chain; its full sequence is Peptide methionine sulfoxide reductase MsrA (169 aa).

Residue Cys10 is part of the active site.

The protein belongs to the MsrA Met sulfoxide reductase family.

It carries out the reaction L-methionyl-[protein] + [thioredoxin]-disulfide + H2O = L-methionyl-(S)-S-oxide-[protein] + [thioredoxin]-dithiol. The enzyme catalyses [thioredoxin]-disulfide + L-methionine + H2O = L-methionine (S)-S-oxide + [thioredoxin]-dithiol. Has an important function as a repair enzyme for proteins that have been inactivated by oxidation. Catalyzes the reversible oxidation-reduction of methionine sulfoxide in proteins to methionine. In Streptococcus pyogenes serotype M2 (strain MGAS10270), this protein is Peptide methionine sulfoxide reductase MsrA.